Reading from the N-terminus, the 191-residue chain is Small ribosomal subunit protein uS7 (191 aa).

This sequence belongs to the universal ribosomal protein uS7 family. Part of the 30S ribosomal subunit.

Functionally, one of the primary rRNA binding proteins, it binds directly to 16S rRNA where it nucleates assembly of the head domain of the 30S subunit. Is located at the subunit interface close to the decoding center. The protein is Small ribosomal subunit protein uS7 of Methanocaldococcus jannaschii (strain ATCC 43067 / DSM 2661 / JAL-1 / JCM 10045 / NBRC 100440) (Methanococcus jannaschii).